A 244-amino-acid chain; its full sequence is Vesicle-associated membrane protein-associated protein SCS2 (244 aa).

S2 carries the post-translational modification N-acetylserine. Topologically, residues 2-222 (SAVEISPDVL…EAATVPAENE (221 aa)) are cytoplasmic. The MSP domain occupies 3 to 126 (AVEISPDVLV…ISKKIKVKYL (124 aa)). S106 bears the Phosphoserine mark. Positions 135-219 (QNQNIQENKE…QIKEAATVPA (85 aa)) are disordered. A compositionally biased stretch (basic and acidic residues) spans 153–168 (SEPKEVPAVVNEKEVP). The segment covering 199–211 (QTSNSTPAPQNQI) has biased composition (polar residues). Residues 223 to 243 (SSSMGIFILVALLILVLGWFY) traverse the membrane as a helical; Anchor for type IV membrane protein segment. R244 is a topological domain (lumenal).

It belongs to the VAMP-associated protein (VAP) (TC 9.B.17) family. In terms of assembly, interacts with OPI1. Also interacts with PBI1. Interacts with EPO1.

It is found in the endoplasmic reticulum membrane. The protein resides in the nucleus membrane. Acts as an endoplasmic reticulum (ER) membrane anchor for cytoplasmic proteins via binding to the FFAT motif of targeted proteins. Regulates phospholipid biosynthesis by modulating the subcellular localization of the transcriptional repressor OPI1. Also contributes to the tethering of the ER to the plasma membrane. Allows interorganelle phosphatidylserine (PtdSer) transport via a process that involves the acceptor membrane complex PDR17-PDS2 that binds to PBI1 which in turn ligates to SCS2 and phosphatidic acid present in the donor membrane, forming a zone of apposition that facilitates PtdSer transfer. In Saccharomyces cerevisiae (strain ATCC 204508 / S288c) (Baker's yeast), this protein is Vesicle-associated membrane protein-associated protein SCS2.